A 332-amino-acid polypeptide reads, in one-letter code: Ribosomal RNA small subunit methyltransferase C (332 aa).

The protein belongs to the methyltransferase superfamily. RsmC family. Monomer.

It localises to the cytoplasm. The enzyme catalyses guanosine(1207) in 16S rRNA + S-adenosyl-L-methionine = N(2)-methylguanosine(1207) in 16S rRNA + S-adenosyl-L-homocysteine + H(+). Its function is as follows. Specifically methylates the guanine in position 1207 of 16S rRNA in the 30S particle. This chain is Ribosomal RNA small subunit methyltransferase C, found in Pseudomonas putida (strain GB-1).